Here is a 119-residue protein sequence, read N- to C-terminus: Large ribosomal subunit protein uL18 (119 aa).

It belongs to the universal ribosomal protein uL18 family. Part of the 50S ribosomal subunit; part of the 5S rRNA/L5/L18/L25 subcomplex. Contacts the 5S and 23S rRNAs.

This is one of the proteins that bind and probably mediate the attachment of the 5S RNA into the large ribosomal subunit, where it forms part of the central protuberance. This is Large ribosomal subunit protein uL18 from Borrelia duttonii (strain Ly).